The sequence spans 244 residues: Carboxy-S-adenosyl-L-methionine synthase (244 aa).

Residues tyrosine 41, 66–68, asparagine 134, and arginine 201 contribute to the S-adenosyl-L-methionine site; that span reads GCS.

It belongs to the class I-like SAM-binding methyltransferase superfamily. Cx-SAM synthase family. Homodimer.

The catalysed reaction is prephenate + S-adenosyl-L-methionine = carboxy-S-adenosyl-L-methionine + 3-phenylpyruvate + H2O. Its function is as follows. Catalyzes the conversion of S-adenosyl-L-methionine (SAM) to carboxy-S-adenosyl-L-methionine (Cx-SAM). The chain is Carboxy-S-adenosyl-L-methionine synthase from Cellvibrio japonicus (strain Ueda107) (Pseudomonas fluorescens subsp. cellulosa).